Consider the following 468-residue polypeptide: ATP synthase subunit beta (468 aa).

148 to 155 (GGAGVGKT) contributes to the ATP binding site.

It belongs to the ATPase alpha/beta chains family. As to quaternary structure, F-type ATPases have 2 components, CF(1) - the catalytic core - and CF(0) - the membrane proton channel. CF(1) has five subunits: alpha(3), beta(3), gamma(1), delta(1), epsilon(1). CF(0) has three main subunits: a(1), b(2) and c(9-12). The alpha and beta chains form an alternating ring which encloses part of the gamma chain. CF(1) is attached to CF(0) by a central stalk formed by the gamma and epsilon chains, while a peripheral stalk is formed by the delta and b chains.

Its subcellular location is the cell membrane. It catalyses the reaction ATP + H2O + 4 H(+)(in) = ADP + phosphate + 5 H(+)(out). Its function is as follows. Produces ATP from ADP in the presence of a proton gradient across the membrane. The catalytic sites are hosted primarily by the beta subunits. The polypeptide is ATP synthase subunit beta (Stenotrophomonas maltophilia (strain K279a)).